The following is a 282-amino-acid chain: MLSRLFKAGEKVLSNLVSKKDIYMASRNQEKSPKVQELYDLCKETFTGKAPSPASMAIQKLCSVLDSVSPADVGLEEVSQDDDRGYGVSGVSRFNRVGRWAQPITFLDIHECDTFTMCIFCFPTSSVIPLHDHPEMAVFSKILYGSLHVKAYDWVEPPCIITQDKGVPGSLPARLAKLVSDKVITPQSEIPALYPKTGGNLHCFTALTPCAVLDILSPPYKESVGRSCSYYMDYPFSTFALENGMKKVDEGKEDEYAWLVQIDTPDDLHMRPGSYTGPTIRV.

The Fe cation site is built by His-131, His-133, and His-202.

It belongs to the cysteine dioxygenase family. Fe(2+) serves as cofactor.

It is found in the nucleus. It localises to the cytoplasm. The enzyme catalyses L-cysteine + O2 = 3-sulfino-L-alanine + H(+). Functionally, catalyzes the oxidation of N-terminal cysteine residues (N-Cys), thus preparing the protein for N-end rule pathway-mediated proteasomal degradation, upstream of the N-end rule enzymes ATE1, ATE2 and PRT6. Controls the preparation of the group VII ethylene response factor (ERF-VII) proteins for degradation via the 26S proteasome N-end rule pathway. Acts as an oxygen sensor that controls the stability of ERF-VII proteins, which are stabilized in flooding-induced hypoxia, and regulate transcriptional adaptation to these adverse conditions. The protein is Plant cysteine oxidase 3 of Arabidopsis thaliana (Mouse-ear cress).